The following is a 307-amino-acid chain: Serine/threonine-protein phosphatase 4 catalytic subunit B (307 aa).

4 residues coordinate Mn(2+): Asp54, His56, Asp82, and Asn114. Catalysis depends on His115, which acts as the Proton donor. 2 residues coordinate Mn(2+): His164 and His238. Leu307 is modified (leucine methyl ester).

This sequence belongs to the PPP phosphatase family. PP-4 (PP-X) subfamily. As to quaternary structure, serine/threonine-protein phosphatase 4 (PP4) occurs in different assemblies of the catalytic and one or more regulatory subunits. Mn(2+) serves as cofactor.

The protein resides in the cytoplasm. It is found in the cytoskeleton. It localises to the microtubule organizing center. The protein localises to the centrosome. It catalyses the reaction O-phospho-L-seryl-[protein] + H2O = L-seryl-[protein] + phosphate. It carries out the reaction O-phospho-L-threonyl-[protein] + H2O = L-threonyl-[protein] + phosphate. Its function is as follows. Protein phosphatase that regulates many processes such as microtubule organization at centrosomes. The polypeptide is Serine/threonine-protein phosphatase 4 catalytic subunit B (ppp4cb) (Danio rerio (Zebrafish)).